The sequence spans 238 residues: Ribonuclease PH (238 aa).

Phosphate-binding positions include Arg-86 and 124-126; that span reads GTR.

Belongs to the RNase PH family. As to quaternary structure, homohexameric ring arranged as a trimer of dimers.

The catalysed reaction is tRNA(n+1) + phosphate = tRNA(n) + a ribonucleoside 5'-diphosphate. Its function is as follows. Phosphorolytic 3'-5' exoribonuclease that plays an important role in tRNA 3'-end maturation. Removes nucleotide residues following the 3'-CCA terminus of tRNAs; can also add nucleotides to the ends of RNA molecules by using nucleoside diphosphates as substrates, but this may not be physiologically important. Probably plays a role in initiation of 16S rRNA degradation (leading to ribosome degradation) during starvation. The protein is Ribonuclease PH of Actinobacillus pleuropneumoniae serotype 7 (strain AP76).